The chain runs to 309 residues: uncharacterized protein (309 aa).

A Radical SAM core domain is found at 17 to 254; that stretch reads RYGQKVHKLT…AGEMIRHTPP (238 aa). [4Fe-4S] cluster is bound by residues Cys33, Cys45, and Cys48.

The protein belongs to the radical SAM superfamily. Requires [4Fe-4S] cluster as cofactor.

This is an uncharacterized protein from Escherichia coli O157:H7.